Reading from the N-terminus, the 933-residue chain is Bromodomain testis-specific protein (933 aa).

The interval 1 to 21 (MSMSSRHLHSSIVNPPPPEYI) is disordered. Residues 28 to 134 (RLTNQLQYLE…KVFMEKIAEM (107 aa)) form the Bromo 1 domain. The short motif at 214–225 (KGIKRKADTTTP) is the Nuclear localization signal element. Residues 235-263 (ESSPTLSEPKPNKILSGTEKTRSAETSAV) are disordered. Residues 278 to 385 (NQICEQLKHC…DVFEGMFAKI (108 aa)) enclose the Bromo 2 domain. Disordered stretches follow at residues 398–425 (RYKT…DERA), 576–610 (KPSS…QLSS), and 627–662 (GGPS…ESAT). Residues 404-418 (EESSSSSSSEQSSSS) show a composition bias toward low complexity. A coiled-coil region spans residues 423–448 (ERAQHLALLQEQLRAVQEQLKALTET). The NET domain occupies 495 to 577 (VSDEEEDVKP…VCLRKRPKKP (83 aa)). Residues 584–603 (KSKEQLNKEKKQELEKRLRD) are compositionally biased toward basic and acidic residues. The span at 630–660 (SRLSESSTSSSASDVSNSSDSSSSDSSDSES) shows a compositional bias: low complexity. Residues 829 to 917 (AKEERERALK…RREAMAGTID (89 aa)) are a coiled coil.

Belongs to the BET family.

Its subcellular location is the nucleus. Its function is as follows. Testis-specific chromatin protein that specifically binds histone H4 acetylated at 'Lys-5' and 'Lys-8' (H4K5ac and H4K8ac, respectively) and plays a key role in spermatogenesis. Required in late pachytene spermatocytes: plays a role in meiotic and post-meiotic cells by binding to acetylated histones at the promoter of specific meiotic and post-meiotic genes, facilitating their activation at the appropriate time. In the post-meiotic phase of spermatogenesis, binds to hyperacetylated histones and participates in their general removal from DNA. Also recognizes and binds a subset of butyrylated histones: able to bind histone H4 butyrylated at 'Lys-8' (H4K8ac), while it is not able to bind H4 butyrylated at 'Lys-5' (H4K5ac). This Xenopus tropicalis (Western clawed frog) protein is Bromodomain testis-specific protein (brdt).